We begin with the raw amino-acid sequence, 395 residues long: MTPPIKSPSSSSVDYGKLSEQLMIAYTKDVLQRNLQKFHGEQHRQQFKQLLNQPVIKSIHSLSGIIVRYRHNNSELDKALDTIDLPKIFERLEIREKTNKDKNLDYDDLLVLELLNYFKNDFFKWVNSPDCPSCGSNEDVQGLGAINPSSSKTISQSQAIIDQVSVIEVHECKKCKQKIEFPRINNPVTLLTTRRGRCGEWVNCFMLILQALIGGGDDDSDRIRYVWNQEDHVWCEYYSLSSKRWIHLDPCEGVYDEPLLYCNNWGKRMSYVIGFNYNYMIDLSDKYIVPEKQIPKNSIVNVQNVNFVISYSNGINQLKHFKRIEQQQQQQEVDVNEQRNLAFLKLYHNFLVPYNKEINQLKPELTKTTPSTDLPSGRQSGSTEWTKSRGENGES.

Residues Cys131, Cys134, Cys172, and Cys175 each contribute to the Zn(2+) site. Residue Cys198 is the Nucleophile of the active site. Catalysis depends on residues His232 and Asp249. Residue Glu252 participates in substrate binding. The tract at residues 363-395 is disordered; sequence PELTKTTPSTDLPSGRQSGSTEWTKSRGENGES. The segment covering 366–385 has biased composition (polar residues); that stretch reads TKTTPSTDLPSGRQSGSTEW. The span at 386-395 shows a compositional bias: basic and acidic residues; the sequence is TKSRGENGES.

Belongs to the transglutaminase-like superfamily. PNGase family. It depends on Zn(2+) as a cofactor.

The protein localises to the cytoplasm. The enzyme catalyses Hydrolysis of an N(4)-(acetyl-beta-D-glucosaminyl)asparagine residue in which the glucosamine residue may be further glycosylated, to yield a (substituted) N-acetyl-beta-D-glucosaminylamine and a peptide containing an aspartate residue.. Its function is as follows. Specifically deglycosylates the denatured form of N-linked glycoproteins in the cytoplasm and assists their proteasome-mediated degradation. Cleaves the beta-aspartyl-glucosamine (GlcNAc) of the glycan and the amide side chain of Asn, converting Asn to Asp. Prefers proteins containing high-mannose over those bearing complex type oligosaccharides. Can recognize misfolded proteins in the endoplasmic reticulum that are exported to the cytosol to be destroyed and deglycosylate them, while it has no activity toward native proteins. Deglycosylation is a prerequisite for subsequent proteasome-mediated degradation of some, but not all, misfolded glycoproteins. This Candida albicans (strain SC5314 / ATCC MYA-2876) (Yeast) protein is Peptide-N(4)-(N-acetyl-beta-glucosaminyl)asparagine amidase (PNG1).